A 463-amino-acid polypeptide reads, in one-letter code: Ribosomal protein uS12 methylthiotransferase RimO (463 aa).

Residues 15 to 130 (PKVGFVSLGC…VMQAVHSHLP (116 aa)) form the MTTase N-terminal domain. Cys-24, Cys-60, Cys-89, Cys-161, Cys-165, and Cys-168 together coordinate [4Fe-4S] cluster. The 246-residue stretch at 147–392 (LTPRHYAYLK…MEVAEQVSAK (246 aa)) folds into the Radical SAM core domain. Residues 395-463 (ARKVGKTLKV…ADGHDLWGEV (69 aa)) enclose the TRAM domain.

Belongs to the methylthiotransferase family. RimO subfamily. Requires [4Fe-4S] cluster as cofactor.

The protein localises to the cytoplasm. The enzyme catalyses L-aspartate(89)-[ribosomal protein uS12]-hydrogen + (sulfur carrier)-SH + AH2 + 2 S-adenosyl-L-methionine = 3-methylsulfanyl-L-aspartate(89)-[ribosomal protein uS12]-hydrogen + (sulfur carrier)-H + 5'-deoxyadenosine + L-methionine + A + S-adenosyl-L-homocysteine + 2 H(+). Its function is as follows. Catalyzes the methylthiolation of an aspartic acid residue of ribosomal protein uS12. This Paraburkholderia phymatum (strain DSM 17167 / CIP 108236 / LMG 21445 / STM815) (Burkholderia phymatum) protein is Ribosomal protein uS12 methylthiotransferase RimO.